Here is a 512-residue protein sequence, read N- to C-terminus: ATP synthase subunit alpha (512 aa).

169–176 (GDRQTGKT) is a binding site for ATP.

This sequence belongs to the ATPase alpha/beta chains family. In terms of assembly, F-type ATPases have 2 components, CF(1) - the catalytic core - and CF(0) - the membrane proton channel. CF(1) has five subunits: alpha(3), beta(3), gamma(1), delta(1), epsilon(1). CF(0) has three main subunits: a(1), b(2) and c(9-12). The alpha and beta chains form an alternating ring which encloses part of the gamma chain. CF(1) is attached to CF(0) by a central stalk formed by the gamma and epsilon chains, while a peripheral stalk is formed by the delta and b chains.

The protein localises to the cell inner membrane. It carries out the reaction ATP + H2O + 4 H(+)(in) = ADP + phosphate + 5 H(+)(out). Functionally, produces ATP from ADP in the presence of a proton gradient across the membrane. The alpha chain is a regulatory subunit. The protein is ATP synthase subunit alpha of Aromatoleum aromaticum (strain DSM 19018 / LMG 30748 / EbN1) (Azoarcus sp. (strain EbN1)).